We begin with the raw amino-acid sequence, 86 residues long: Small ribosomal subunit protein bS16 (86 aa).

Belongs to the bacterial ribosomal protein bS16 family.

The chain is Small ribosomal subunit protein bS16 from Borreliella burgdorferi (strain ATCC 35210 / DSM 4680 / CIP 102532 / B31) (Borrelia burgdorferi).